We begin with the raw amino-acid sequence, 205 residues long: SCO2-like protein RF_0960 (205 aa).

Residues C82, C86, and H172 each coordinate Cu cation.

This sequence belongs to the SCO1/2 family.

The chain is SCO2-like protein RF_0960 from Rickettsia felis (strain ATCC VR-1525 / URRWXCal2) (Rickettsia azadi).